Reading from the N-terminus, the 323-residue chain is Biotin synthase (323 aa).

Residues 46-264 (TEIQLSSLLS…IAVARITMPR (219 aa)) enclose the Radical SAM core domain. Cysteine 61, cysteine 65, and cysteine 68 together coordinate [4Fe-4S] cluster. Residues cysteine 105, cysteine 136, cysteine 196, and arginine 268 each contribute to the [2Fe-2S] cluster site.

The protein belongs to the radical SAM superfamily. Biotin synthase family. As to quaternary structure, homodimer. [4Fe-4S] cluster serves as cofactor. [2Fe-2S] cluster is required as a cofactor.

It carries out the reaction (4R,5S)-dethiobiotin + (sulfur carrier)-SH + 2 reduced [2Fe-2S]-[ferredoxin] + 2 S-adenosyl-L-methionine = (sulfur carrier)-H + biotin + 2 5'-deoxyadenosine + 2 L-methionine + 2 oxidized [2Fe-2S]-[ferredoxin]. The protein operates within cofactor biosynthesis; biotin biosynthesis; biotin from 7,8-diaminononanoate: step 2/2. Catalyzes the conversion of dethiobiotin (DTB) to biotin by the insertion of a sulfur atom into dethiobiotin via a radical-based mechanism. This Bordetella avium (strain 197N) protein is Biotin synthase.